Here is a 958-residue protein sequence, read N- to C-terminus: Nuclear factor NF-kappa-B p100 subunit (958 aa).

One can recognise an RHD domain in the interval 40–230; that stretch reads LLMSYLSIIE…DPIHDSKSPG (191 aa). The short motif at 343-347 is the Nuclear localization signal element; that stretch reads RKRRK. 2 disordered regions span residues 350–374 and 411–442; these read PTFN…SFGQ and CSAT…QTDS. Residues 352-390 form a GRR region; the sequence is FNNHFYGGGSPMGGAPPGSSFGQGGGSNINYQYTGMNSA. A compositionally biased stretch (gly residues) spans 357–374; it reads YGGGSPMGGAPPGSSFGQ. Residues 412 to 425 are compositionally biased toward polar residues; it reads SATNSSEKNQQPSI. 6 ANK repeats span residues 500–529, 539–568, 572–603, 610–639, 644–674, and 678–707; these read NGDT…SIPN, LQQT…DPTI, YGNS…QKNL, HGLS…NVNS, SGKS…DINA, and GGNT…NVLS. The segment at 705-766 is disordered; it reads VLSENDEPVN…SAEEMHRREQ (62 aa). The span at 724–734 shows a compositional bias: acidic residues; it reads SESDSDVQMDT. Residues 753–766 show a composition bias toward basic and acidic residues; the sequence is ECEHSAEEMHRREQ. Residues 815–901 enclose the Death domain; the sequence is VNVLALETNT…EGVELLCKSE (87 aa). Residues 904 to 916 show a composition bias toward basic and acidic residues; the sequence is AKHHSPAESKNDS. Residues 904–958 form a disordered region; sequence AKHHSPAESKNDSAYESQSMEVDQSSGNLMDDSQKQTIPVSAAELCPTTEPTIGQ. Over residues 917–931 the composition is skewed to polar residues; it reads AYESQSMEVDQSSGN.

Active NF-kappa-B is a heterodimer of an about 52 kDa DNA-binding subunit and the weak DNA-binding subunit p65. Two heterodimers might form a labile tetramer. Post-translationally, while translation occurs, the particular unfolded structure after the GRR repeat promotes the generation of p52 making it an acceptable substrate for the proteasome. This process is known as cotranslational processing. The processed form is active and the unprocessed form acts as an inhibitor (I kappa B-like), being able to form cytosolic complexes with NF-kappa B, trapping it in the cytoplasm. Complete folding of the region downstream of the GRR repeat precludes processing. In terms of processing, constitutive processing is tightly suppressed by its C-terminal processing inhibitory domain, named PID, which contains the death domain. Expressed in spleen.

The protein localises to the nucleus. It localises to the cytoplasm. In terms of biological role, appears to have dual functions such as cytoplasmic retention of attached NF-kappa-B proteins and generation of p52 by a cotranslational processing. The proteasome-mediated process ensures the production of both p52 and p100 and preserves their independent function. p52 binds to the kappa-B consensus sequence 5'-GGRNNYYCC-3', located in the enhancer region of genes involved in immune response and acute phase reactions. In concert with RELB, may play a role in the regulation of the circadian clock. The polypeptide is Nuclear factor NF-kappa-B p100 subunit (nfkb2) (Xenopus laevis (African clawed frog)).